Consider the following 338-residue polypeptide: Heat-inducible transcription repressor HrcA (338 aa).

Belongs to the HrcA family.

Functionally, negative regulator of class I heat shock genes (grpE-dnaK-dnaJ and groELS operons). Prevents heat-shock induction of these operons. This is Heat-inducible transcription repressor HrcA from Bacillus anthracis (strain A0248).